The chain runs to 94 residues: MSCQQNQQQCQPPPSCPSPKCPPKSPAQCLPPPSSDCALSSGGCGPSSESGCCLSHHRHFRSHQCRRQRSNSCDRGSGQQGGGSCRGHGSGGCC.

The span at 1 to 10 (MSCQQNQQQC) shows a compositional bias: low complexity. Disordered stretches follow at residues 1–35 (MSCQ…PPSS) and 65–94 (CRRQ…GGCC). Positions 11 to 34 (QPPPSCPSPKCPPKSPAQCLPPPS) are enriched in pro residues. Over residues 78 to 94 (GQQGGGSCRGHGSGGCC) the composition is skewed to gly residues.

This sequence belongs to the LCE family. In terms of assembly, interacts with CYSRT1; the interaction is direct. As to expression, skin-specific. Expression was readily detected in adult trunk skin, adult arm skin, fetal skin, penal skin, vulva, esophagus and tongue. Not expressed in the cervix, rectum, lung, colon, or placenta.

Its function is as follows. A structural component of the cornified envelope of the stratum corneum involved in innate cutaneous host defense. Possesses defensin-like antimicrobial activity against a broad spectrum of Gram-positive and Gram-negative bacteria, both aerobic and anaerobic species. Upon inflammation, may regulate skin barrier repair by shaping cutaneous microbiota composition and immune response to bacterial antigens. The polypeptide is Late cornified envelope protein 3C (Homo sapiens (Human)).